A 559-amino-acid chain; its full sequence is Large neutral amino acids transporter small subunit 3 (559 aa).

Residues 20-40 (VLENLFFSAVLLGWGSLLIIL) form a helical membrane-spanning segment. N-linked (GlcNAc...) asparagine glycosylation is present at N57. The next 5 membrane-spanning stretches (helical) occupy residues 78-98 (LGFT…GILM), 105-124 (PVRL…MALA), 131-151 (LSPL…CLTF), 168-188 (MALM…IKLI), and 191-211 (AGVA…LIFL). N-linked (GlcNAc...) asparagine glycosylation is found at N212 and N229. A phosphoserine mark is found at S237, S262, and S267. The next 6 membrane-spanning stretches (helical) occupy residues 304 to 324 (FLWS…YMAA), 357 to 377 (SVFG…GYIM), 419 to 439 (AISA…TCLI), 446 to 466 (FVTF…CGSL), 485 to 505 (LISA…VGPL), and 510 to 530 (FWVN…PSYL).

Belongs to the SLC43A transporter (TC 2.A.1.44) family. In terms of tissue distribution, ubiquitously expressed in fetus and adult. Highest expression in adult pancreas, liver, skeletal muscle. In fetus, highest expression in liver and lower levels in kidney, and lung. Exclusively expressed in the glomeruli along the glomerular capillary walls.

The protein resides in the cell membrane. Its subcellular location is the apical cell membrane. The protein localises to the endoplasmic reticulum membrane. The enzyme catalyses D-leucine(in) = D-leucine(out). It carries out the reaction L-leucine(in) = L-leucine(out). The catalysed reaction is L-isoleucine(in) = L-isoleucine(out). It catalyses the reaction L-methionine(in) = L-methionine(out). The enzyme catalyses L-phenylalanine(in) = L-phenylalanine(out). It carries out the reaction L-valine(in) = L-valine(out). Its function is as follows. Uniport that mediates the transport of neutral amino acids such as L-leucine, L-isoleucine, L-valine, and L-phenylalanine. The transport activity is sodium ions-independent, electroneutral and mediated by a facilitated diffusion. The protein is Large neutral amino acids transporter small subunit 3 of Homo sapiens (Human).